We begin with the raw amino-acid sequence, 150 residues long: Transcriptional regulator MraZ (150 aa).

SpoVT-AbrB domains lie at 5–52 (VTHL…PLPD) and 81–124 (AHDL…DAEA).

This sequence belongs to the MraZ family. Forms oligomers.

The protein resides in the cytoplasm. It is found in the nucleoid. The polypeptide is Transcriptional regulator MraZ (Alkalilimnicola ehrlichii (strain ATCC BAA-1101 / DSM 17681 / MLHE-1)).